A 491-amino-acid polypeptide reads, in one-letter code: Cobyric acid synthase (491 aa).

Positions 250 to 439 (EVTIAVIRLP…LHGIFDNGAW (190 aa)) constitute a GATase cobBQ-type domain. The active-site Nucleophile is the Cys-331. The active site involves His-431.

This sequence belongs to the CobB/CobQ family. CobQ subfamily.

It functions in the pathway cofactor biosynthesis; adenosylcobalamin biosynthesis. Functionally, catalyzes amidations at positions B, D, E, and G on adenosylcobyrinic A,C-diamide. NH(2) groups are provided by glutamine, and one molecule of ATP is hydrogenolyzed for each amidation. This chain is Cobyric acid synthase, found in Synechococcus sp. (strain ATCC 27144 / PCC 6301 / SAUG 1402/1) (Anacystis nidulans).